The sequence spans 84 residues: Small ribosomal subunit protein uS15 (84 aa).

The protein belongs to the universal ribosomal protein uS15 family. Part of the 30S ribosomal subunit. Forms a bridge to the 50S subunit in the 70S ribosome, contacting the 23S rRNA.

Its function is as follows. One of the primary rRNA binding proteins, it binds directly to 16S rRNA where it helps nucleate assembly of the platform of the 30S subunit by binding and bridging several RNA helices of the 16S rRNA. Forms an intersubunit bridge (bridge B4) with the 23S rRNA of the 50S subunit in the ribosome. This Fervidobacterium nodosum (strain ATCC 35602 / DSM 5306 / Rt17-B1) protein is Small ribosomal subunit protein uS15.